Consider the following 456-residue polypeptide: Adenylosuccinate lyase (456 aa).

N(6)-(1,2-dicarboxyethyl)-AMP contacts are provided by residues 15-16, 90-92, and 122-123; these read RY, NHD, and TS. Catalysis depends on His-171, which acts as the Proton donor/acceptor. Residue Gln-247 coordinates N(6)-(1,2-dicarboxyethyl)-AMP. Ser-295 (proton donor/acceptor) is an active-site residue. N(6)-(1,2-dicarboxyethyl)-AMP-binding positions include Ser-296, 301-303, Asn-309, Arg-335, and 340-344; these read KVN and STVLR.

This sequence belongs to the lyase 1 family. Adenylosuccinate lyase subfamily. As to quaternary structure, homotetramer. Residues from neighboring subunits contribute catalytic and substrate-binding residues to each active site.

It carries out the reaction N(6)-(1,2-dicarboxyethyl)-AMP = fumarate + AMP. The enzyme catalyses (2S)-2-[5-amino-1-(5-phospho-beta-D-ribosyl)imidazole-4-carboxamido]succinate = 5-amino-1-(5-phospho-beta-D-ribosyl)imidazole-4-carboxamide + fumarate. It participates in purine metabolism; AMP biosynthesis via de novo pathway; AMP from IMP: step 2/2. Its pathway is purine metabolism; IMP biosynthesis via de novo pathway; 5-amino-1-(5-phospho-D-ribosyl)imidazole-4-carboxamide from 5-amino-1-(5-phospho-D-ribosyl)imidazole-4-carboxylate: step 2/2. In terms of biological role, catalyzes two reactions in de novo purine nucleotide biosynthesis. Catalyzes the breakdown of 5-aminoimidazole- (N-succinylocarboxamide) ribotide (SAICAR or 2-[5-amino-1-(5-phospho-beta-D-ribosyl)imidazole-4-carboxamido]succinate) to 5-aminoimidazole-4-carboxamide ribotide (AICAR or 5-amino-1-(5-phospho-beta-D-ribosyl)imidazole-4-carboxamide) and fumarate, and of adenylosuccinate (ADS or N(6)-(1,2-dicarboxyethyl)-AMP) to adenosine monophosphate (AMP) and fumarate. This chain is Adenylosuccinate lyase (purB), found in Legionella pneumophila (strain Corby).